Reading from the N-terminus, the 287-residue chain is MARKTLTTALVKKFIPSRKSKSRKGENGIVLVVGGSYIYHGAPILSSIAALRSGTDLVYTSVPKINVASTRSVSPNLIVIPLVDQKLTRGAVNKLLGALPRKLDSATIGMGLAIQEKNALLHLVKSLLDRDVRLSLDASALIPEVLPLLANKNVVVTPHAGEFKRLFGQVPSNSKNERIKLVEEKAKEFGITVLLKGSTDIISNGSTTYLYEKKIPAMTVGGTGDVLSGLVAGLLSKNRKPLESAAAAAFINGLAGKVVQKKLGLHMTSMDLLPEISTVMKPFDKIM.

In terms of domain architecture, YjeF C-terminal spans 7-283 (TTALVKKFIP…PEISTVMKPF (277 aa)). (6S)-NADPHX is bound by residues A42 and H159. AMP is bound by residues 196–200 (KGSTD) and G224. Residue D225 participates in (6S)-NADPHX binding.

This sequence belongs to the NnrD/CARKD family. In terms of assembly, homotetramer. It depends on Mg(2+) as a cofactor.

The catalysed reaction is (6S)-NADHX + ADP = AMP + phosphate + NADH + H(+). The enzyme catalyses (6S)-NADPHX + ADP = AMP + phosphate + NADPH + H(+). Functionally, catalyzes the dehydration of the S-form of NAD(P)HX at the expense of ADP, which is converted to AMP. Together with NAD(P)HX epimerase, which catalyzes the epimerization of the S- and R-forms, the enzyme allows the repair of both epimers of NAD(P)HX, a damaged form of NAD(P)H that is a result of enzymatic or heat-dependent hydration. The polypeptide is ADP-dependent (S)-NAD(P)H-hydrate dehydratase (Nitrosopumilus maritimus (strain SCM1)).